A 365-amino-acid chain; its full sequence is Methylthioribose-1-phosphate isomerase (365 aa).

Asp-255 acts as the Proton donor in catalysis.

Belongs to the eIF-2B alpha/beta/delta subunits family. MtnA subfamily.

The protein resides in the cytoplasm. Its subcellular location is the nucleus. It catalyses the reaction 5-(methylsulfanyl)-alpha-D-ribose 1-phosphate = 5-(methylsulfanyl)-D-ribulose 1-phosphate. It functions in the pathway amino-acid biosynthesis; L-methionine biosynthesis via salvage pathway; L-methionine from S-methyl-5-thio-alpha-D-ribose 1-phosphate: step 1/6. Its function is as follows. Catalyzes the interconversion of methylthioribose-1-phosphate (MTR-1-P) into methylthioribulose-1-phosphate (MTRu-1-P). This is Methylthioribose-1-phosphate isomerase from Drosophila willistoni (Fruit fly).